Consider the following 419-residue polypeptide: Putative competence-damage inducible protein (419 aa).

This sequence belongs to the CinA family.

In Streptococcus agalactiae serotype Ia (strain ATCC 27591 / A909 / CDC SS700), this protein is Putative competence-damage inducible protein.